The primary structure comprises 700 residues: MSDQKVFARYKANEIVTDLQHFGVKKFKSNITRRKNALRKIIANLVLGNYGEMSVLFSELLKFWQIEDDLEVKRICHEYIRVIGALKPQQAREALPFIMDDFKSRDEKLQIMALRTLVLVPVKELSDQAFDCIISLVNHKSPPEQVTRTAIYALLDLDEIDHERVLGLSSILHDIVKAQSSSPEVIVAALHTLYSIHEKNANMEPFRIPLELAFDMLELLPELNEWNKATVLEVLTTSVVPQHYLDTHEMIELALPYLQQVNTYVVLNSLKFIMYLLNYVDVIKETLAEKLSNSVIALLDKPPELQFLVLRNVILLLLSRESSLLRLDISYFFIEYNDPIYIKDTKLECLYLLANKETLPRILEELEQYATDIDIQMSRKSVRAIGNLAVKLDEDSVHDCVAVLLDLLEFGVDYVVQEIISVFRNILRKYPNNFKANVTELVKHTEVVQEPESKNAMIWIITQYSDVIPNYLELFRVFSSNMFSETLEVQFSILNSAIKFFIRSPTKETEELCMDLLKGCIDHENNPDLRDKTLMYWRLLSLTKTSRISNAITFESLKSVLDGELPLIEMNTKLDPTVLEELELNIGTIVSIYLKPVSHIFRLNKTKLLPQSPILNPNKDLLPVVGNSFPPTGANRDRQNSESQSSTKSRKTAMMDDYDKPAEKINQLKGKRKSSSNNPSKLSRKPSTLLRKLSMKRPFS.

The disordered stretch occupies residues 625-700 (VGNSFPPTGA…RKLSMKRPFS (76 aa)). Residue Ser-649 is modified to Phosphoserine. Thr-652 carries the post-translational modification Phosphothreonine. A compositionally biased stretch (basic and acidic residues) spans 653–663 (AMMDDYDKPAE). Ser-683 is modified (phosphoserine).

Belongs to the adaptor complexes large subunit family. As to quaternary structure, adaptor protein complex 2 (AP-2) is a heterotetramer composed of two large adaptins (alpha-type subunit APL3 and beta-type subunit APL1), a medium chain (mu-type subunit APM4) and a small adaptin (sigma-type subunit APS2). Interacts with APS2.

The protein localises to the cell membrane. Its subcellular location is the membrane. The protein resides in the coated pit. Functionally, adaptins are components of the adaptor complexes which link clathrin to receptors in coated vesicles. Clathrin-associated protein complexes are believed to interact with the cytoplasmic tails of membrane proteins, leading to their selection and concentration. Beta adaptin is a subunit of the plasma membrane adaptor. The protein is AP-2 complex subunit beta (APL1) of Saccharomyces cerevisiae (strain ATCC 204508 / S288c) (Baker's yeast).